Consider the following 376-residue polypeptide: Ribonucleoside-diphosphate reductase subunit beta (376 aa).

3 residues coordinate Fe cation: D85, E116, and H119. The active site involves Y123. Fe cation contacts are provided by E205, E239, and H242.

This sequence belongs to the ribonucleoside diphosphate reductase small chain family. As to quaternary structure, tetramer of two alpha and two beta subunits. The cofactor is Fe cation.

The enzyme catalyses a 2'-deoxyribonucleoside 5'-diphosphate + [thioredoxin]-disulfide + H2O = a ribonucleoside 5'-diphosphate + [thioredoxin]-dithiol. Its function is as follows. Provides the precursors necessary for DNA synthesis. Catalyzes the biosynthesis of deoxyribonucleotides from the corresponding ribonucleotides. The sequence is that of Ribonucleoside-diphosphate reductase subunit beta (nrdB) from Haemophilus influenzae (strain ATCC 51907 / DSM 11121 / KW20 / Rd).